The following is a 491-amino-acid chain: Ribosome biogenesis protein YTM1 (491 aa).

The segment at 8–103 is ubiquitin-like (UBL) domain; that stretch reads IKIKFTTNES…EAFLTIEYTR (96 aa). Residues 113 to 491 are sufficient for interaction with ERB1 and association with 66S pre-ribosomes; the sequence is SFQNDDWISS…QINKGSDISK (379 aa). WD repeat units follow at residues 128 to 167, 169 to 207, 241 to 280, 318 to 358, 360 to 399, 409 to 449, and 456 to 491; these read RNLS…EKQY, GHSA…VVDQ, GHKA…MAKI, GHTE…CVDT, TTGF…SNTN, GHTN…SLYT, and STKS…DISK. A disordered region spans residues 205–228; sequence VDQNEEDEEENEANEGDDGDNDME. The span at 207–225 shows a compositional bias: acidic residues; the sequence is QNEEDEEENEANEGDDGDN.

This sequence belongs to the WD repeat WDR12/YTM1 family. In terms of assembly, component of the NOP7 complex, composed of ERB1, NOP7 and YTM1. The complex is held together by ERB1, which interacts with NOP7 via its N-terminal domain and with YTM1 via a high-affinity interaction between the seven-bladed beta-propeller domains of the 2 proteins. The NOP7 complex associates with the 66S pre-ribosome. Interacts (via UBL domain) with MDN1 (via VWFA/MIDAS domain).

It localises to the nucleus. The protein resides in the nucleolus. It is found in the nucleoplasm. In terms of biological role, component of the NOP7 complex, which is required for maturation of the 25S and 5.8S ribosomal RNAs and formation of the 60S ribosome. This chain is Ribosome biogenesis protein YTM1, found in Lodderomyces elongisporus (strain ATCC 11503 / CBS 2605 / JCM 1781 / NBRC 1676 / NRRL YB-4239) (Yeast).